Here is a 544-residue protein sequence, read N- to C-terminus: NADP-dependent malic enzyme (544 aa).

The segment at 1 to 22 (MQNKPSFILRNPSANKGTGFNN) is disordered. Residues 12–21 (PSANKGTGFN) show a composition bias toward polar residues. The active-site Proton donor is the Y92. Position 145 (R145) interacts with NAD(+). K163 (proton acceptor) is an active-site residue. Residues E234, D235, and D258 each coordinate a divalent metal cation. Residue D258 coordinates NAD(+). 287–303 (VFLGAGSAGIGVADCIM) is a binding site for NADP(+). N400 contributes to the NAD(+) binding site.

The protein belongs to the malic enzymes family. As to quaternary structure, homotetramer. Mg(2+) serves as cofactor. Requires Mn(2+) as cofactor. In terms of tissue distribution, expressed in the fruiting body.

It localises to the cytoplasm. It catalyses the reaction (S)-malate + NADP(+) = pyruvate + CO2 + NADPH. The enzyme catalyses oxaloacetate + H(+) = pyruvate + CO2. The protein is NADP-dependent malic enzyme (malA) of Dictyostelium discoideum (Social amoeba).